Here is a 366-residue protein sequence, read N- to C-terminus: Anhydro-N-acetylmuramic acid kinase (366 aa).

Position 10–17 (10–17 (GTSMDGID)) interacts with ATP.

It belongs to the anhydro-N-acetylmuramic acid kinase family.

It carries out the reaction 1,6-anhydro-N-acetyl-beta-muramate + ATP + H2O = N-acetyl-D-muramate 6-phosphate + ADP + H(+). Its pathway is amino-sugar metabolism; 1,6-anhydro-N-acetylmuramate degradation. It participates in cell wall biogenesis; peptidoglycan recycling. Its function is as follows. Catalyzes the specific phosphorylation of 1,6-anhydro-N-acetylmuramic acid (anhMurNAc) with the simultaneous cleavage of the 1,6-anhydro ring, generating MurNAc-6-P. Is required for the utilization of anhMurNAc either imported from the medium or derived from its own cell wall murein, and thus plays a role in cell wall recycling. The protein is Anhydro-N-acetylmuramic acid kinase of Legionella pneumophila subsp. pneumophila (strain Philadelphia 1 / ATCC 33152 / DSM 7513).